Consider the following 351-residue polypeptide: Mitochondrial mRNA pseudouridine synthase RPUSD3 (351 aa).

The N-terminal 25 residues, 1 to 25 (MRAVLAREMDGRRVLGRFWSGWRRG), are a transit peptide targeting the mitochondrion. Positions 33 to 58 (EDAGFGTEARHQRQPRGSCQRSGPLG) are disordered. S71 is subject to Phosphoserine.

It belongs to the pseudouridine synthase RluA family. Forms a regulatory protein-RNA complex, consisting of RCC1L, NGRN, RPUSD3, RPUSD4, TRUB2, FASTKD2 and 16S mt-rRNA.

The protein localises to the mitochondrion matrix. It catalyses the reaction a uridine in mRNA = a pseudouridine in mRNA. In terms of biological role, catalyzes uridine to pseudouridine isomerization (pseudouridylation) of specific mitochondrial mRNAs (mt-mRNAs), a post-transcriptional modification necessary for their translation. Acts at position 390 in COXI mt-mRNA and at position 697-699 in mitochondrial COXIII mt-mRNA. As a component of a functional protein-RNA module, consisting of RCC1L, NGRN, RPUSD3, RPUSD4, TRUB2, FASTKD2 and 16S mitochondrial ribosomal RNA (16S mt-rRNA), controls 16S mt-rRNA abundance and may play a role in mitochondrial ribosome biogenesis. The polypeptide is Mitochondrial mRNA pseudouridine synthase RPUSD3 (Homo sapiens (Human)).